We begin with the raw amino-acid sequence, 37 residues long: uncharacterized protein (37 aa).

A helical transmembrane segment spans residues 17–37 (TFVLIVVLFILLIIVGAAFIC).

Belongs to the SscA family.

It is found in the membrane. This is an uncharacterized protein from Bacillus subtilis (strain 168).